Consider the following 615-residue polypeptide: Granule-bound starch synthase 1, chloroplastic/amyloplastic (615 aa).

The transit peptide at 1–70 directs the protein to the chloroplast; it reads MAALVTSQLA…DRRCLSMVVR (70 aa). Position 91 (Lys-91) interacts with ADP-alpha-D-glucose.

The protein belongs to the glycosyltransferase 1 family. Bacterial/plant glycogen synthase subfamily. Found in seeds and pollen.

It is found in the plastid. It localises to the chloroplast. The protein localises to the amyloplast. The enzyme catalyses an NDP-alpha-D-glucose + [(1-&gt;4)-alpha-D-glucosyl](n) = [(1-&gt;4)-alpha-D-glucosyl](n+1) + a ribonucleoside 5'-diphosphate + H(+). Its pathway is glycan biosynthesis; starch biosynthesis. This is Granule-bound starch synthase 1, chloroplastic/amyloplastic (WAXY) from Triticum aestivum (Wheat).